Reading from the N-terminus, the 141-residue chain is Putative pre-16S rRNA nuclease (141 aa).

It belongs to the YqgF nuclease family.

The protein resides in the cytoplasm. Its function is as follows. Could be a nuclease involved in processing of the 5'-end of pre-16S rRNA. The protein is Putative pre-16S rRNA nuclease of Cupriavidus taiwanensis (strain DSM 17343 / BCRC 17206 / CCUG 44338 / CIP 107171 / LMG 19424 / R1) (Ralstonia taiwanensis (strain LMG 19424)).